A 130-amino-acid polypeptide reads, in one-letter code: uncharacterized protein (130 aa).

An N-terminal signal peptide occupies residues 1 to 19 (MLAPLFLCCLRNLFRKLIS).

It is found in the secreted. This is an uncharacterized protein from Homo sapiens (Human).